Reading from the N-terminus, the 75-residue chain is Small ribosomal subunit protein bS18 (75 aa).

It belongs to the bacterial ribosomal protein bS18 family. As to quaternary structure, part of the 30S ribosomal subunit. Forms a tight heterodimer with protein bS6.

Its function is as follows. Binds as a heterodimer with protein bS6 to the central domain of the 16S rRNA, where it helps stabilize the platform of the 30S subunit. The chain is Small ribosomal subunit protein bS18 from Acinetobacter baylyi (strain ATCC 33305 / BD413 / ADP1).